The sequence spans 466 residues: Benzoate transport protein (466 aa).

Over 1 to 22 (MSREINVNQMIDDSKLTPFHWR) the chain is Cytoplasmic. A helical membrane pass occupies residues 23 to 43 (VIILSTLIIIFDGYDLVIYGV). Residues 44 to 60 (ALPLLMKEWAIDPVTAG) lie on the Periplasmic side of the membrane. The helical transmembrane segment at 61 to 81 (FIGSIALFGMMFGALIFGTIA) threads the bilayer. At 82–93 (DKLEHLGVSRKK) the chain is on the cytoplasmic side. A helical transmembrane segment spans residues 94–114 (VIAVCIILFSLCTVLCGFSET). Residues 115-119 (TTQFS) are Periplasmic-facing. Residues 120–140 (IFRFLAGVGIGGVMPNVIALV) form a helical membrane-spanning segment. The Cytoplasmic portion of the chain corresponds to 141–150 (SEYAPKKFKS). The chain crosses the membrane as a helical span at residues 151–171 (FFVTLMFSGYAIGGMTAAFLG). At 172 to 181 (SILVPLYGWK) the chain is on the periplasmic side. The helical transmembrane segment at 182 to 202 (IMFMIAGIPLVLLLPLMKVLP) threads the bilayer. Topologically, residues 203–258 (ESIDYLVRKKKDETVRFIMTKMVPSYQYQPDHVFVLNSSNQNQAQAPVKMIFQEQR) are cytoplasmic. Residues 259-279 (AFSTMMFWCSIFMTLIMVYAL) form a helical membrane-spanning segment. At 280–297 (GNWLPKLMIEAGYNLSKS) the chain is on the periplasmic side. A helical transmembrane segment spans residues 298–318 (LIFLFSLNVGGMIGSILGGYL). Topologically, residues 319-325 (ADRYNVK) are cytoplasmic. The helical transmembrane segment at 326–346 (FVTMGLLLLGAISLSLLSFQF) threads the bilayer. The Periplasmic portion of the chain corresponds to 347-348 (SS). A helical membrane pass occupies residues 349-369 (VILYILIACAGAASIGAQIML). At 370–387 (LAYMAKFYAPNVRSTGIG) the chain is on the cytoplasmic side. A helical transmembrane segment spans residues 388 to 408 (WGLGMGRVGAILGPILTGWLL). Topologically, residues 409-414 (SLQLPH) are periplasmic. A helical transmembrane segment spans residues 415-435 (FYNFLALSIPAVLGIVTVFLI). Topologically, residues 436–466 (NDRRMYQPEPISPIANQNDTTTVKVNEAVSH) are cytoplasmic.

This sequence belongs to the major facilitator superfamily. Aromatic acid:H(+) symporter (AAHS) (TC 2.A.1.15) family.

Its subcellular location is the cell inner membrane. Its function is as follows. Probable uptake of benzoate. In Acinetobacter baylyi (strain ATCC 33305 / BD413 / ADP1), this protein is Benzoate transport protein (benK).